The chain runs to 263 residues: Small ribosomal subunit protein uS2 (263 aa).

Positions 228 to 263 are disordered; that stretch reads QLEEPEADLADEDDNGMTTSDDGDAEALDIPDDSDA. Over residues 230-263 the composition is skewed to acidic residues; that stretch reads EEPEADLADEDDNGMTTSDDGDAEALDIPDDSDA.

It belongs to the universal ribosomal protein uS2 family.

The sequence is that of Small ribosomal subunit protein uS2 from Thermosynechococcus vestitus (strain NIES-2133 / IAM M-273 / BP-1).